Here is a 921-residue protein sequence, read N- to C-terminus: Bifunctional aspartokinase/homoserine dehydrogenase, chloroplastic (921 aa).

A chloroplast-targeting transit peptide spans 1–87; it reads SLSSAISPSS…DDSVEKVHLP (87 aa). Residues 88–339 form an aspartokinase region; it reads RGAMWSIHKF…VSEAVVLKTL (252 aa). The tract at residues 340-567 is interface; that stretch reads SYQEAWEMSY…LSRTTIAVGI (228 aa). 2 consecutive ACT domains span residues 417-489 and 498-575; these read VEGT…QVAN and TVGQ…LIGA. Residues 568–921 are homoserine dehydrogenase; that stretch reads VGPGLIGATL…RLASYLGAPS (354 aa). Residue Ile-573 participates in NAD(+) binding. Positions 573, 605, 654, and 678 each coordinate NADP(+). Residue Ile-573 participates in NADPH binding. Thr-654 is an NAD(+) binding site. NADPH contacts are provided by Thr-654 and Lys-678. Na(+) contacts are provided by Glu-705, Val-708, Ala-710, and Leu-712. NADP(+)-binding residues include Gly-763 and Glu-766. Residues Glu-766 and Asp-777 each contribute to the L-homoserine site. Lys-781 (proton donor) is an active-site residue. Residue Gly-898 coordinates NAD(+). Gly-898 provides a ligand contact to NADP(+). Gly-898 serves as a coordination point for NADPH.

The protein in the N-terminal section; belongs to the aspartokinase family. In the C-terminal section; belongs to the homoserine dehydrogenase family. The cofactor is a metal cation.

The protein resides in the plastid. It localises to the chloroplast. It carries out the reaction L-homoserine + NADP(+) = L-aspartate 4-semialdehyde + NADPH + H(+). It catalyses the reaction L-homoserine + NAD(+) = L-aspartate 4-semialdehyde + NADH + H(+). The catalysed reaction is L-aspartate + ATP = 4-phospho-L-aspartate + ADP. It participates in amino-acid biosynthesis; L-lysine biosynthesis via DAP pathway; (S)-tetrahydrodipicolinate from L-aspartate: step 1/4. Its pathway is amino-acid biosynthesis; L-methionine biosynthesis via de novo pathway; L-homoserine from L-aspartate: step 1/3. It functions in the pathway amino-acid biosynthesis; L-methionine biosynthesis via de novo pathway; L-homoserine from L-aspartate: step 3/3. The protein operates within amino-acid biosynthesis; L-threonine biosynthesis; L-threonine from L-aspartate: step 1/5. It participates in amino-acid biosynthesis; L-threonine biosynthesis; L-threonine from L-aspartate: step 3/5. Functionally, bifunctional aspartate kinase and homoserine dehydrogenase that catalyzes the first and the third steps toward the synthesis of lysine, methionine and threonine from aspartate. The polypeptide is Bifunctional aspartokinase/homoserine dehydrogenase, chloroplastic (Daucus carota (Wild carrot)).